The sequence spans 291 residues: N-acetylmannosamine kinase (291 aa).

Residues 5–12 (AIDIGGTK) and 132–139 (GVGGGVVS) each bind ATP. Positions 156, 166, 168, and 173 each coordinate Zn(2+).

It belongs to the ROK (NagC/XylR) family. NanK subfamily. In terms of assembly, homodimer.

It catalyses the reaction an N-acyl-D-mannosamine + ATP = an N-acyl-D-mannosamine 6-phosphate + ADP + H(+). It functions in the pathway amino-sugar metabolism; N-acetylneuraminate degradation; D-fructose 6-phosphate from N-acetylneuraminate: step 2/5. Its function is as follows. Catalyzes the phosphorylation of N-acetylmannosamine (ManNAc) to ManNAc-6-P. This Escherichia coli O7:K1 (strain IAI39 / ExPEC) protein is N-acetylmannosamine kinase.